The primary structure comprises 410 residues: Zinc finger TRAF-type-containing protein 1 (410 aa).

A compositionally biased stretch (gly residues) spans 1–13; that stretch reads MSGAEEAGGGGPA. The disordered stretch occupies residues 1–22; sequence MSGAEEAGGGGPAAGPAGSVPA. The RING-type; degenerate zinc-finger motif lies at 117-162; the sequence is CTVCLDLPKASVYQCTNGHLMCAGCFIHLLADARLKEEQATCPNCR. A TRAF-type zinc finger spans residues 158-231; that stretch reads CPNCRCEISK…PWHGPFHELT (74 aa).

Belongs to the ZFTRAF1 family. Interacts with LGALS3.

It localises to the cytoplasm. Its subcellular location is the perinuclear region. The chain is Zinc finger TRAF-type-containing protein 1 from Bos taurus (Bovine).